The following is a 331-amino-acid chain: Ketol-acid reductoisomerase (NADP(+)) (331 aa).

Residues 3–183 (AQMYYDDDAD…GGTRAGALKT (181 aa)) form the KARI N-terminal Rossmann domain. NADP(+)-binding positions include 26–29 (YGSQ), Ser-52, and Ser-54. His-109 is an active-site residue. Gly-135 contacts NADP(+). A KARI C-terminal knotted domain is found at 184 to 329 (TFKEETETDL…TELRSLMSWL (146 aa)). Residues Asp-192, Glu-196, Glu-228, and Glu-232 each contribute to the Mg(2+) site. Ser-253 contributes to the substrate binding site.

It belongs to the ketol-acid reductoisomerase family. Requires Mg(2+) as cofactor.

It carries out the reaction (2R)-2,3-dihydroxy-3-methylbutanoate + NADP(+) = (2S)-2-acetolactate + NADPH + H(+). It catalyses the reaction (2R,3R)-2,3-dihydroxy-3-methylpentanoate + NADP(+) = (S)-2-ethyl-2-hydroxy-3-oxobutanoate + NADPH + H(+). It functions in the pathway amino-acid biosynthesis; L-isoleucine biosynthesis; L-isoleucine from 2-oxobutanoate: step 2/4. It participates in amino-acid biosynthesis; L-valine biosynthesis; L-valine from pyruvate: step 2/4. Functionally, involved in the biosynthesis of branched-chain amino acids (BCAA). Catalyzes an alkyl-migration followed by a ketol-acid reduction of (S)-2-acetolactate (S2AL) to yield (R)-2,3-dihydroxy-isovalerate. In the isomerase reaction, S2AL is rearranged via a Mg-dependent methyl migration to produce 3-hydroxy-3-methyl-2-ketobutyrate (HMKB). In the reductase reaction, this 2-ketoacid undergoes a metal-dependent reduction by NADPH to yield (R)-2,3-dihydroxy-isovalerate. In Thermobifida fusca (strain YX), this protein is Ketol-acid reductoisomerase (NADP(+)).